The primary structure comprises 131 residues: UPF0342 protein DSY1594 (131 aa).

Belongs to the UPF0342 family.

The chain is UPF0342 protein DSY1594 from Desulfitobacterium hafniense (strain Y51).